The sequence spans 182 residues: Peptidyl-prolyl cis-trans isomerase ssp-1 (182 aa).

The 35-residue stretch at 7–41 (TGLPEDWEVRHSQSKNLPYYFNSATKTSRWEPPSG) folds into the WW domain. One can recognise a PpiC domain in the interval 71-182 (QGKIRCAHLL…SGLHLIERLE (112 aa)).

The enzyme catalyses [protein]-peptidylproline (omega=180) = [protein]-peptidylproline (omega=0). Site-specific PPIase with respect to the amino acid N-terminal to the proline residue. Peptides with glutamate, phosphoserine, or phosphothreonine in the -1 position are the best substrates. It is not only able to isomerize small peptides but is also active in protein folding. This Neurospora crassa (strain ATCC 24698 / 74-OR23-1A / CBS 708.71 / DSM 1257 / FGSC 987) protein is Peptidyl-prolyl cis-trans isomerase ssp-1 (ssp-1).